The chain runs to 139 residues: Ribosome maturation factor RimP (139 aa).

The protein belongs to the RimP family.

It is found in the cytoplasm. Functionally, required for maturation of 30S ribosomal subunits. This is Ribosome maturation factor RimP from Syntrophomonas wolfei subsp. wolfei (strain DSM 2245B / Goettingen).